The chain runs to 427 residues: Alpha/beta hydrolase gkaG (427 aa).

Asp368 is a catalytic residue.

The protein belongs to the AB hydrolase superfamily. As to quaternary structure, homodimer.

Its pathway is mycotoxin biosynthesis. In terms of biological role, alpha/beta hydrolase; part of the gene cluster that mediates the biosynthesis of GKK1032, fungal natural products containing a macrocyclic para-cyclophane connected to a decahydrofluorene ring system that show potent antitumor activities. Within the pathway, gkaG catalyzes the Knoevenagel condensation that affords the 3-pyrrolin-2-one ring, using as substrate the polyketide-tyrosyl acyl thioester product of gkaA. The pathway begins with the PKS-NRPS gkaA which, with the help of the trans-enoyl reductase gkaC, synthesizes the polyketide-tyrosyl acyl thioester product which can be reductively off-loaded by the terminal reductase (R) domain in gkaA. The alpha/beta hydrolase gkaG is then required to catalyze the subsequent Knoevenagel condensation that affords the 3-pyrrolin-2-one ring, whereas the three proteins gkaB, gkaX and gkaZ then function synergistically to form the cyclophane. In Penicillium citrinum, this protein is Alpha/beta hydrolase gkaG.